The sequence spans 60 residues: UPF0434 protein PM0859 (60 aa).

This sequence belongs to the UPF0434 family.

In Pasteurella multocida (strain Pm70), this protein is UPF0434 protein PM0859.